A 265-amino-acid polypeptide reads, in one-letter code: Iron(3+)-hydroxamate import ATP-binding protein FhuC (265 aa).

The region spanning 12–248 is the ABC transporter domain; it reads FALRNISFRV…ETLEMIYGIP (237 aa). ATP is bound by residues 44 to 51 and 168 to 179; these read GHNGSGKS and CLLLDEPTSALD.

This sequence belongs to the ABC transporter superfamily. Iron (Fe3+)-hydroxamate importer (TC 3.A.1.14.7) family. The complex is composed of two ATP-binding proteins (FhuC), a transmembrane protein (FhuB) and a solute-binding protein (FhuD). FhuC interacts with FhuB.

It is found in the cell inner membrane. The enzyme catalyses ATP + H2O + Fe(3+)-hydroxamate complex-[hydroxamate-binding protein]Side 1 = ADP + phosphate + Fe(3+)-hydroxamate complexSide 2 + [hydroxamate-binding protein]Side 1.. With respect to regulation, ATPase activity is inhibited by vanadate. In terms of biological role, part of the ABC transporter complex FhuCDB involved in iron(3+)-hydroxamate import. Responsible for energy coupling to the transport system. This is Iron(3+)-hydroxamate import ATP-binding protein FhuC (fhuC) from Escherichia coli (strain K12).